We begin with the raw amino-acid sequence, 528 residues long: GTPase Obg (528 aa).

An Obg domain is found at 2–159; it reads ASFVDRVVLH…SDIVLELKSI (158 aa). In terms of domain architecture, OBG-type G spans 160 to 343; sequence ADIALVGFPS…LGFAMAEIVQ (184 aa). Residues 166–173, 191–195, 212–215, 295–298, and 324–326 contribute to the GTP site; these read GFPSAGKS, FTTLI, DVPG, NKVD, and SAT. Ser173 and Thr193 together coordinate Mg(2+). Residues 363–447 form the OCT domain; that stretch reads PRAVNESGFK…DDGVVFDWEP (85 aa). Positions 471–490 are disordered; the sequence is DRPTRSQKRDEQIERREAKA.

It belongs to the TRAFAC class OBG-HflX-like GTPase superfamily. OBG GTPase family. Monomer. The cofactor is Mg(2+).

The protein resides in the cytoplasm. In terms of biological role, an essential GTPase which binds GTP, GDP and possibly (p)ppGpp with moderate affinity, with high nucleotide exchange rates and a fairly low GTP hydrolysis rate. Plays a role in control of the cell cycle, stress response, ribosome biogenesis and in those bacteria that undergo differentiation, in morphogenesis control. The protein is GTPase Obg of Paenarthrobacter aurescens (strain TC1).